The sequence spans 680 residues: Dipeptidyl carboxypeptidase (680 aa).

H469 contributes to the Zn(2+) binding site. E470 is an active-site residue. Residues H473 and H476 each contribute to the Zn(2+) site.

Belongs to the peptidase M3 family. Zn(2+) is required as a cofactor.

The protein localises to the cytoplasm. The enzyme catalyses Hydrolysis of unblocked, C-terminal dipeptides from oligopeptides, with broad specificity. Does not hydrolyze bonds in which P1' is Pro, or both P1 and P1' are Gly.. Its function is as follows. Removes dipeptides from the C-termini of N-blocked tripeptides, tetrapeptides and larger peptides. The protein is Dipeptidyl carboxypeptidase (dcp) of Salmonella typhimurium (strain LT2 / SGSC1412 / ATCC 700720).